Here is a 767-residue protein sequence, read N- to C-terminus: Photosystem I P700 chlorophyll a apoprotein A1 (767 aa).

Transmembrane regions (helical) follow at residues 72 to 95, 158 to 181, 197 to 221, 305 to 323, 364 to 387, 403 to 429, 451 to 473, and 548 to 566; these read IFSA…FHGA, LMAL…FHYH, LNHH…HVSA, IAHH…GHMY, WHAQ…QHMY, IGLF…IAMV, AIIS…LYIH, and FMVH…LILL. The [4Fe-4S] cluster site is built by C590 and C599. Transmembrane regions (helical) follow at residues 606–627 and 681–703; these read HVFL…HFSW and TAAY…MFLF. Residue H692 coordinates chlorophyll a'. The chlorophyll a site is built by M700 and Y708. Position 709 (W709) interacts with phylloquinone. Residues 741–761 form a helical membrane-spanning segment; sequence AVGVAHYLLGGIATTWAFFHA.

The protein belongs to the PsaA/PsaB family. In terms of assembly, the PsaA/B heterodimer binds the P700 chlorophyll special pair and subsequent electron acceptors. PSI consists of a core antenna complex that captures photons, and an electron transfer chain that converts photonic excitation into a charge separation. The cyanobacterial PSI reaction center is composed of one copy each of PsaA,B,C,D,E,F,I,J,K,L,M and X, and forms trimeric complexes. It depends on PSI electron transfer chain: 5 chlorophyll a, 1 chlorophyll a', 2 phylloquinones and 3 4Fe-4S clusters. PSI core antenna: 90 chlorophyll a, 22 carotenoids, 3 phospholipids and 1 galactolipid. P700 is a chlorophyll a/chlorophyll a' dimer, A0 is one or more chlorophyll a, A1 is one or both phylloquinones and FX is a shared 4Fe-4S iron-sulfur center. as a cofactor.

Its subcellular location is the cellular thylakoid membrane. It carries out the reaction reduced [plastocyanin] + hnu + oxidized [2Fe-2S]-[ferredoxin] = oxidized [plastocyanin] + reduced [2Fe-2S]-[ferredoxin]. In terms of biological role, psaA and PsaB bind P700, the primary electron donor of photosystem I (PSI), as well as the electron acceptors A0, A1 and FX. PSI is a plastocyanin/cytochrome c6-ferredoxin oxidoreductase, converting photonic excitation into a charge separation, which transfers an electron from the donor P700 chlorophyll pair to the spectroscopically characterized acceptors A0, A1, FX, FA and FB in turn. Oxidized P700 is reduced on the lumenal side of the thylakoid membrane by plastocyanin or cytochrome c6. This chain is Photosystem I P700 chlorophyll a apoprotein A1, found in Synechococcus sp. (strain CC9605).